A 496-amino-acid chain; its full sequence is Glutamyl-tRNA(Gln) amidotransferase subunit A (496 aa).

Catalysis depends on charge relay system residues Lys75 and Ser150. Ser174 functions as the Acyl-ester intermediate in the catalytic mechanism.

The protein belongs to the amidase family. GatA subfamily. Heterotrimer of A, B and C subunits.

The enzyme catalyses L-glutamyl-tRNA(Gln) + L-glutamine + ATP + H2O = L-glutaminyl-tRNA(Gln) + L-glutamate + ADP + phosphate + H(+). Functionally, allows the formation of correctly charged Gln-tRNA(Gln) through the transamidation of misacylated Glu-tRNA(Gln) in organisms which lack glutaminyl-tRNA synthetase. The reaction takes place in the presence of glutamine and ATP through an activated gamma-phospho-Glu-tRNA(Gln). The chain is Glutamyl-tRNA(Gln) amidotransferase subunit A from Burkholderia mallei (strain NCTC 10247).